We begin with the raw amino-acid sequence, 272 residues long: MMKRQFEDVKRIVIKIGTSSLVLANGKINLEKIDHLAFVISSLMNKGKEVILVSSGAMGFGLDLLKMAKRPSQLAKQQAVSSVGQVAMMSLYSQIFAHYQTTVSQILLTRDVVVFPESLANVTNAFESLISLGIVPIVNENDAVSVDEMDHSTKFGDNDRLSAIVARITRADLLIMLSDIDGLFDKNPTIYEDARLRSHVTEITEDIIASAGGAGSRFGTGGMLSKIQSAQMMFEHQGQMILMNGANPRDILRVLEGEKLGTWFKQIERGDA.

ATP is bound at residue K15. Residues S55, D142, and N158 each contribute to the substrate site. ATP-binding positions include 178 to 179 (SD) and 220 to 226 (TGGMLSK).

It belongs to the glutamate 5-kinase family.

It is found in the cytoplasm. The catalysed reaction is L-glutamate + ATP = L-glutamyl 5-phosphate + ADP. Its pathway is amino-acid biosynthesis; L-proline biosynthesis; L-glutamate 5-semialdehyde from L-glutamate: step 1/2. Catalyzes the transfer of a phosphate group to glutamate to form L-glutamate 5-phosphate. This Streptococcus equi subsp. zooepidemicus (strain H70) protein is Glutamate 5-kinase.